We begin with the raw amino-acid sequence, 275 residues long: 3-methyl-2-oxobutanoate hydroxymethyltransferase (275 aa).

D44 and D83 together coordinate Mg(2+). 3-methyl-2-oxobutanoate contacts are provided by residues 44–45 (DS), D83, and K113. E115 contacts Mg(2+). The active-site Proton acceptor is E182.

The protein belongs to the PanB family. In terms of assembly, homodecamer; pentamer of dimers. The cofactor is Mg(2+).

The protein resides in the cytoplasm. It carries out the reaction 3-methyl-2-oxobutanoate + (6R)-5,10-methylene-5,6,7,8-tetrahydrofolate + H2O = 2-dehydropantoate + (6S)-5,6,7,8-tetrahydrofolate. It participates in cofactor biosynthesis; (R)-pantothenate biosynthesis; (R)-pantoate from 3-methyl-2-oxobutanoate: step 1/2. Functionally, catalyzes the reversible reaction in which hydroxymethyl group from 5,10-methylenetetrahydrofolate is transferred onto alpha-ketoisovalerate to form ketopantoate. This is 3-methyl-2-oxobutanoate hydroxymethyltransferase from Clostridium novyi (strain NT).